Reading from the N-terminus, the 165-residue chain is P2Y purinoceptor 4 (165 aa).

The helical transmembrane segment at 1-16 (SDTLYVLSLPTLVYYY) threads the bilayer. At 17–30 (AARNHWPFGTGFCK) the chain is on the extracellular side. Residues 31 to 51 (FVRFLFYWNLYCSVLFLTCIS) traverse the membrane as a helical segment. Topologically, residues 52-74 (VHRYMGICHPLRALRWGRPRFAS) are cytoplasmic. A helical membrane pass occupies residues 75 to 95 (LLCLAVWLVVAGCLVPNLFFV). Over 96–124 (TTSPNGTTILCHDTTRPEEFDHYVHFSSA) the chain is Extracellular. Residue asparagine 100 is glycosylated (N-linked (GlcNAc...) asparagine). The helical transmembrane segment at 125–145 (VMVLLFGLPFLVTLVCYGLMA) threads the bilayer. At 146–165 (RRLYRPLPGAGQSSSRLRSL) the chain is on the cytoplasmic side.

It belongs to the G-protein coupled receptor 1 family.

Its subcellular location is the cell membrane. In terms of biological role, receptor for UTP and UDP coupled to G-proteins that activate a phosphatidylinositol-calcium second messenger system. The polypeptide is P2Y purinoceptor 4 (P2RY4) (Cricetulus griseus (Chinese hamster)).